The primary structure comprises 530 residues: Estrogen receptor beta (530 aa).

The segment at 1 to 148 (MDIKNSPSSL…GPSSKRDAHF (148 aa)) is modulating. A Phosphoserine; alternate modification is found at Ser-61. Ser-61 is a glycosylation site (O-linked (GlcNAc) serine; alternate). 2 positions are modified to phosphoserine; by MAPK: Ser-87 and Ser-105. 2 consecutive NR C4-type zinc fingers follow at residues 149-169 (CAVC…CEGC) and 185-209 (CPAT…LRKC). The nuclear receptor DNA-binding region spans 149–214 (CAVCSDYASG…RLRKCYEVGM (66 aa)). The region spanning 264 to 498 (SPEQLVLTLL…DLLLEMMNAH (235 aa)) is the NR LBD domain. The segment at 507–530 (ITGSECSPAEDSKSTEGSQNPQSP) is disordered. Positions 521–530 (TEGSQNPQSP) are enriched in polar residues.

The protein belongs to the nuclear hormone receptor family. NR3 subfamily. Binds DNA as a homodimer. Can form a heterodimer with ESR1. Interacts with NCOA1, NCOA3, NCOA5 and NCOA6 coactivators, leading to a strong increase of transcription of target genes. Interacts with UBE1C and AKAP13. Interacts with DNTTIP2. Interacts with CCDC62 in the presence of estradiol/E2; this interaction seems to enhance the transcription of target genes. Interacts with DNAAF4. Interacts with PRMT2. Interacts with CCAR2 (via N-terminus) in a ligand-independent manner. Interacts with RBM39, in the presence of estradiol (E2). Interacts with STUB1/CHIP. In terms of processing, phosphorylation at Ser-87 and Ser-105 recruits NCOA1.

It is found in the nucleus. Functionally, nuclear hormone receptor. Binds estrogens with an affinity similar to that of ESR1/ER-alpha, and activates expression of reporter genes containing estrogen response elements (ERE) in an estrogen-dependent manner. The protein is Estrogen receptor beta (ESR2) of Callithrix jacchus (White-tufted-ear marmoset).